A 329-amino-acid polypeptide reads, in one-letter code: D-alanine--D-alanine ligase (329 aa).

In terms of domain architecture, ATP-grasp spans Lys120–Asn326. Ala150–Glu205 contacts ATP. 3 residues coordinate Mg(2+): Asp280, Glu293, and Asn295.

The protein belongs to the D-alanine--D-alanine ligase family. The cofactor is Mg(2+). Requires Mn(2+) as cofactor.

It localises to the cytoplasm. It catalyses the reaction 2 D-alanine + ATP = D-alanyl-D-alanine + ADP + phosphate + H(+). It functions in the pathway cell wall biogenesis; peptidoglycan biosynthesis. Its function is as follows. Cell wall formation. This chain is D-alanine--D-alanine ligase, found in Vibrio campbellii (strain ATCC BAA-1116).